The primary structure comprises 394 residues: Ceramide glucosyltransferase-A (394 aa).

Topologically, residues 1-10 (MAVLDLALQG) are lumenal. Residues 11–32 (LAIFGCVLFFVLWFMHFLSIVY) traverse the membrane as a helical segment. Over 33-195 (TRLHLNKKIS…QVYFGTSHPR (163 aa)) the chain is Cytoplasmic. Residue Asp-92 is a short sequence motif, D1. Residue Asp-144 is a short sequence motif, D2. A helical transmembrane segment spans residues 196-215 (SYISANVTGFKCVTGMSCLM). The Lumenal portion of the chain corresponds to 216 to 287 (RKEVLDQAGG…KLRINMLPAT (72 aa)). Residue Asp-236 is a short sequence motif, D3. The active-site Proton acceptor is the Asp-236. The short motif at 272–276 (RMIRW) is the (Q/R)XXRW element. The chain crosses the membrane as a helical span at residues 288 to 304 (IICEPISECFVASLIIG). Residues 305 to 309 (WAAHH) lie on the Cytoplasmic side of the membrane. The chain crosses the membrane as a helical span at residues 310–328 (IFRWDIMVFFMCHCLAWFI). Residues 329–348 (FDYIQLRGVQGGPLNFSKLD) are Lumenal-facing. A helical transmembrane segment spans residues 349 to 369 (YAVAWFIRESMTIYIFLSALW). The Cytoplasmic segment spans residues 370–394 (DPTISWRTGRFRLRCGGTAEEILDV).

This sequence belongs to the glycosyltransferase 2 family. As to expression, at the late gastrula stage, weakly expressed ubiquitously. As neurulation proceeds (stages 15-16), expression moves towards the dorsal structures: involuted paraxial mesoderm and neural folds. In the tailbud embryo (stage 28), expression is restricted to the notochord. At later stages (stage 35), expression remains in the notochord and also appears weakly in the cephalic region.

Its subcellular location is the golgi apparatus membrane. The catalysed reaction is an N-acylsphing-4-enine + UDP-alpha-D-glucose = a beta-D-glucosyl-(1&lt;-&gt;1')-N-acylsphing-4-enine + UDP + H(+). The enzyme catalyses UDP-alpha-D-xylose + an N-acylsphing-4-enine = a beta-D-xylosyl-(1&lt;-&gt;1')-N-acylsphing-4-enine + UDP + H(+). It catalyses the reaction N-(9Z-octadecenoyl)-sphing-4-enine + UDP-alpha-D-xylose = beta-D-xylosyl-(1&lt;-&gt;1')-N-(9Z-octadecenoyl)-sphing-4-enine + UDP + H(+). It participates in lipid metabolism; sphingolipid metabolism. Its function is as follows. Participates in the initial step of the glucosylceramide-based glycosphingolipid/GSL synthetic pathway at the cytosolic surface of the Golgi. Catalyzes the transfer of glucose from UDP-glucose to ceramide to produce glucosylceramide/GlcCer (such as beta-D-glucosyl-(1&lt;-&gt;1')-N-acylsphing-4-enine). Glucosylceramide is the core component of glycosphingolipids/GSLs, amphipathic molecules consisting of a ceramide lipid moiety embedded in the outer leaflet of the membrane, linked to one of hundreds of different externally oriented oligosaccharide structures. Glycosphingolipids are essential components of membrane microdomains that mediate membrane trafficking and signal transduction. They are implicated in many fundamental cellular processes, including growth, differentiation, migration, morphogenesis, cell-to-cell and cell-to-matrix interactions. Glycosphingolipids are required for convergence extension movements during early development. Catalyzes the synthesis of xylosylceramide/XylCer (such as beta-D-xylosyl-(1&lt;-&gt;1')-N-acylsphing-4-enine) using UDP-Xyl as xylose donor. The sequence is that of Ceramide glucosyltransferase-A (ugcg-a) from Xenopus laevis (African clawed frog).